Consider the following 417-residue polypeptide: Actin-related protein 10 (417 aa).

This sequence belongs to the actin family. As to quaternary structure, subunit of dynactin, a multiprotein complex part of a tripartite complex with dynein and a adapter, such as BICDL1, BICD2 or HOOK3. The dynactin complex is built around ACTR1A/ACTB filament and consists of an actin-related filament composed of a shoulder domain, a pointed end and a barbed end. Its length is defined by its flexible shoulder domain. The soulder is composed of 2 DCTN1 subunits, 4 DCTN2 and 2 DCTN3. The 4 DCNT2 (via N-terminus) bind the ACTR1A filament and act as molecular rulers to determine the length. The pointed end is important for binding dynein-dynactin cargo adapters. Consists of 4 subunits: ACTR10, DCNT4, DCTN5 and DCTN6. The barbed end is composed of a CAPZA1:CAPZB heterodimers, which binds ACTR1A/ACTB filament and dynactin and stabilizes dynactin.

It localises to the cytoplasm. It is found in the cytoskeleton. Functionally, part of the dynactin complex that activates the molecular motor dynein for ultra-processive transport along microtubules. This chain is Actin-related protein 10 (ACTR10), found in Homo sapiens (Human).